The chain runs to 677 residues: Methionine--tRNA ligase (677 aa).

The 'HIGH' region signature appears at 15-25 (PYANGSIHLGH). Zn(2+) contacts are provided by cysteine 146, cysteine 149, cysteine 159, and cysteine 162. The 'KMSKS' region motif lies at 333-337 (KMSKS). Lysine 336 is an ATP binding site. One can recognise a tRNA-binding domain in the interval 575–677 (DFAKVDLRVA…AGAKPGHQVK (103 aa)).

This sequence belongs to the class-I aminoacyl-tRNA synthetase family. MetG type 1 subfamily. As to quaternary structure, homodimer. Requires Zn(2+) as cofactor.

Its subcellular location is the cytoplasm. The catalysed reaction is tRNA(Met) + L-methionine + ATP = L-methionyl-tRNA(Met) + AMP + diphosphate. In terms of biological role, is required not only for elongation of protein synthesis but also for the initiation of all mRNA translation through initiator tRNA(fMet) aminoacylation. This chain is Methionine--tRNA ligase, found in Escherichia coli O157:H7.